The chain runs to 274 residues: Large ribosomal subunit protein uL2 (274 aa).

The tract at residues 224-274 (AMNPVDHPHGGGEGRTGEGQVPVSPWNTMTKGYRTRSNKRTQTFIVSRRKK) is disordered. Over residues 229 to 239 (DHPHGGGEGRT) the composition is skewed to basic and acidic residues.

It belongs to the universal ribosomal protein uL2 family. Part of the 50S ribosomal subunit. Forms a bridge to the 30S subunit in the 70S ribosome.

In terms of biological role, one of the primary rRNA binding proteins. Required for association of the 30S and 50S subunits to form the 70S ribosome, for tRNA binding and peptide bond formation. It has been suggested to have peptidyltransferase activity; this is somewhat controversial. Makes several contacts with the 16S rRNA in the 70S ribosome. In Methylibium petroleiphilum (strain ATCC BAA-1232 / LMG 22953 / PM1), this protein is Large ribosomal subunit protein uL2.